A 43-amino-acid chain; its full sequence is MLHPHQWTLSLHQLPRLSRPRQSHLPAQTPQPRLSYPKTRRQI.

Positions 13-43 (QLPRLSRPRQSHLPAQTPQPRLSYPKTRRQI) are disordered.

This is an uncharacterized protein from Clover yellow mosaic virus (CYMV).